A 357-amino-acid chain; its full sequence is tRNA N6-adenosine threonylcarbamoyltransferase (357 aa).

2 residues coordinate Fe cation: histidine 120 and histidine 124. Residues 143-147 (LVSGG), aspartate 176, glycine 189, and asparagine 289 contribute to the substrate site. Aspartate 317 serves as a coordination point for Fe cation.

Belongs to the KAE1 / TsaD family. The cofactor is Fe(2+).

Its subcellular location is the cytoplasm. The enzyme catalyses L-threonylcarbamoyladenylate + adenosine(37) in tRNA = N(6)-L-threonylcarbamoyladenosine(37) in tRNA + AMP + H(+). Functionally, required for the formation of a threonylcarbamoyl group on adenosine at position 37 (t(6)A37) in tRNAs that read codons beginning with adenine. Is involved in the transfer of the threonylcarbamoyl moiety of threonylcarbamoyl-AMP (TC-AMP) to the N6 group of A37, together with TsaE and TsaB. TsaD likely plays a direct catalytic role in this reaction. The protein is tRNA N6-adenosine threonylcarbamoyltransferase of Polynucleobacter asymbioticus (strain DSM 18221 / CIP 109841 / QLW-P1DMWA-1) (Polynucleobacter necessarius subsp. asymbioticus).